The chain runs to 495 residues: uncharacterized protein (495 aa).

Residues 389–457 (PLPNNGACEH…KDATCPHCGN (69 aa)) form a CHY-type zinc finger. Residues cysteine 396, histidine 398, cysteine 410, cysteine 411, cysteine 417, cysteine 420, histidine 421, histidine 427, cysteine 437, cysteine 440, cysteine 452, and cysteine 455 each coordinate Zn(2+). Positions 473-483 (GMRDRVRMSRK) are enriched in basic and acidic residues. A disordered region spans residues 473–495 (GMRDRVRMSRKDPRKYKRKHHGN). The span at 484–495 (DPRKYKRKHHGN) shows a compositional bias: basic residues.

The protein localises to the cytoplasm. This is an uncharacterized protein from Schizosaccharomyces pombe (strain 972 / ATCC 24843) (Fission yeast).